The sequence spans 266 residues: Exosome complex component Rrp42 (266 aa).

The protein belongs to the RNase PH family. Rrp42 subfamily. As to quaternary structure, component of the archaeal exosome complex. Forms a hexameric ring-like arrangement composed of 3 Rrp41-Rrp42 heterodimers. The hexameric ring associates with a trimer of Rrp4 and/or Csl4 subunits.

The protein localises to the cytoplasm. In terms of biological role, non-catalytic component of the exosome, which is a complex involved in RNA degradation. Contributes to the structuring of the Rrp41 active site. The protein is Exosome complex component Rrp42 of Methanosarcina mazei (strain ATCC BAA-159 / DSM 3647 / Goe1 / Go1 / JCM 11833 / OCM 88) (Methanosarcina frisia).